Here is a 119-residue protein sequence, read N- to C-terminus: NADH-quinone oxidoreductase subunit A (119 aa).

Transmembrane regions (helical) follow at residues 7–27 (FPVLLFLVVGTGLGVALVSIG), 63–83 (LVAILFIIFDLETAFLFPWGV), and 88–108 (IGWPGFLAMMIFLLEFLLGFA).

It belongs to the complex I subunit 3 family. NDH-1 is composed of 14 different subunits. Subunits NuoA, H, J, K, L, M, N constitute the membrane sector of the complex.

It localises to the cell inner membrane. The catalysed reaction is a quinone + NADH + 5 H(+)(in) = a quinol + NAD(+) + 4 H(+)(out). Its function is as follows. NDH-1 shuttles electrons from NADH, via FMN and iron-sulfur (Fe-S) centers, to quinones in the respiratory chain. The immediate electron acceptor for the enzyme in this species is believed to be ubiquinone. Couples the redox reaction to proton translocation (for every two electrons transferred, four hydrogen ions are translocated across the cytoplasmic membrane), and thus conserves the redox energy in a proton gradient. In Paraburkholderia phytofirmans (strain DSM 17436 / LMG 22146 / PsJN) (Burkholderia phytofirmans), this protein is NADH-quinone oxidoreductase subunit A.